The primary structure comprises 79 residues: Major outer membrane lipoprotein Lpp 2 (79 aa).

The signal sequence occupies residues 1 to 21; the sequence is MNRTNQLILGAVVLGSTLLAG. Residue C22 is the site of N-palmitoyl cysteine attachment. A lipid anchor (S-diacylglycerol cysteine) is attached at C22. 2 consecutive repeats follow at residues 25-35 and 39-49; these read NAKIDQLSSDV and SAKVEQLSNDV. Positions 28–69 form a coiled coil; that stretch reads IDQLSSDVQTLSAKVEQLSNDVNAMRSDVQAAKDDAARANQR. An N6-murein peptidoglycan lysine modification is found at K79.

This sequence belongs to the Lpp family. Homotrimer.

Its subcellular location is the cell outer membrane. The protein localises to the secreted. It is found in the cell wall. Functionally, plays an important role in virulence. A highly abundant outer membrane lipoprotein that controls the distance between the inner and outer membranes. The only protein known to be covalently linked to the peptidoglycan network (PGN). Also non-covalently binds the PGN. The link between the cell outer membrane and PGN contributes to maintenance of the structural and functional integrity of the cell envelope, and maintains the correct distance between the PGN and the outer membrane. The sequence is that of Major outer membrane lipoprotein Lpp 2 from Salmonella typhimurium (strain LT2 / SGSC1412 / ATCC 700720).